Consider the following 246-residue polypeptide: Putative outer membrane protein YiaT (246 aa).

A signal peptide spans 1–21 (MLINRNIVALFALPFMASATA).

The protein belongs to the MipA/OmpV family.

The protein localises to the cell outer membrane. This Escherichia coli O157:H7 protein is Putative outer membrane protein YiaT (yiaT).